Reading from the N-terminus, the 936-residue chain is Protein SIEL (936 aa).

Interacts with SHR, MGP, SCR, JKD, CPC, TMO7 and AGL21, but not with LFY or STM.

It is found in the nucleus. It localises to the endosome. The protein resides in the cytoplasm. The protein localises to the cell cortex. Intracellular shuttle that promotes movement of SHR from the stele into the endodermis. Required for SHR association to endosomes and localization, and for intercellular movement of SHR. This is Protein SIEL from Arabidopsis thaliana (Mouse-ear cress).